The following is a 923-amino-acid chain: DNA mismatch repair protein PMS1 (923 aa).

Basic and acidic residues-rich tracts occupy residues 543–553, 565–581, and 591–601; these read DMTPSERDSEL, NVER…RFEE, and GDVERVSEDNP. The segment at 543 to 603 is disordered; that stretch reads DMTPSERDSE…ERVSEDNPRC (61 aa).

It belongs to the DNA mismatch repair MutL/HexB family. As to quaternary structure, heterodimer of MLH1 and PMS1, called MutLalpha, which is the major MMR MutL activity correcting base-base mismatches as well as IDLs. The heterodimer binds double strand DNA independently of a mismatch with positive cooperativity and has more than one DNA binding site. Forms a ternary complex with either the MSH2-MSH6 (MutSalpha) or the MSH2-MSH3 heterodimer (MutSbeta), which recognize and bind to mismatch DNA. Ternary complex formation is promoted by ATP binding. In terms of tissue distribution, expressed at very low levels in mature leaves. Detected in rapidly dividing tissues.

It localises to the nucleus. Required for DNA mismatch repair (MMR), correcting base-base mismatches and insertion-deletion loops (IDLs) resulting from DNA replication, DNA damage or from recombination events between non-identical sequences during meiosis. Component of the MutLalpha heterodimer that forms a ternary complex with the MutS heterodimers, which initially recognize the DNA mismatches. This complex is thought to be responsible for directing the downstream MMR events, including strand discrimination, excision, and resynthesis. Plays a major role in maintaining the genetic stability of simple sequence repeats and in the repair of heteroduplex sites present in meiotic recombination intermediates. Does not seem to be required for homologous somatic recombination. The polypeptide is DNA mismatch repair protein PMS1 (PMS1) (Arabidopsis thaliana (Mouse-ear cress)).